The sequence spans 259 residues: Type III pantothenate kinase (259 aa).

6 to 13 serves as a coordination point for ATP; sequence DVGNTNCT. Residue 107–110 coordinates substrate; it reads GSDR. Residue Asp109 is the Proton acceptor of the active site. Asp129 contacts K(+). Thr132 serves as a coordination point for ATP. Position 184 (Thr184) interacts with substrate.

This sequence belongs to the type III pantothenate kinase family. As to quaternary structure, homodimer. The cofactor is NH4(+). K(+) serves as cofactor.

It is found in the cytoplasm. The enzyme catalyses (R)-pantothenate + ATP = (R)-4'-phosphopantothenate + ADP + H(+). The protein operates within cofactor biosynthesis; coenzyme A biosynthesis; CoA from (R)-pantothenate: step 1/5. Its function is as follows. Catalyzes the phosphorylation of pantothenate (Pan), the first step in CoA biosynthesis. In Listeria monocytogenes serotype 4b (strain CLIP80459), this protein is Type III pantothenate kinase.